The following is a 269-amino-acid chain: GTP cyclohydrolase FolE2 (269 aa).

It belongs to the GTP cyclohydrolase IV family.

The enzyme catalyses GTP + H2O = 7,8-dihydroneopterin 3'-triphosphate + formate + H(+). It functions in the pathway cofactor biosynthesis; 7,8-dihydroneopterin triphosphate biosynthesis; 7,8-dihydroneopterin triphosphate from GTP: step 1/1. Functionally, converts GTP to 7,8-dihydroneopterin triphosphate. This Burkholderia multivorans (strain ATCC 17616 / 249) protein is GTP cyclohydrolase FolE2.